Reading from the N-terminus, the 215-residue chain is MTQTLADMRRDYTRDGLTEAQSPDEPFALFHAWFADAVNTEQPPVEANAMTLATVDEEGRPHCRVLLLKGLDTQGFTFFTNYESAKGQQLAARPFAAMTFFWPTLERQVRIEGRVEKVSAQESDAYYQVRPLGSRLGAWASPQSRVIADRDELEGLIRQTEQRFADTRPHCPEHWGGYRLLPERIEFWQGRSSRLHDRLNYRLIDDRWTRERLAP.

Residues 9 to 12 (RRDY) and lysine 69 each bind substrate. FMN-binding positions include 64–69 (RVLLLK), 79–80 (FT), lysine 86, and glutamine 108. Residues tyrosine 126, arginine 130, and serine 134 each contribute to the substrate site. Residues 143–144 (QS) and tryptophan 188 contribute to the FMN site. A substrate-binding site is contributed by 194 to 196 (RLH). An FMN-binding site is contributed by arginine 198.

This sequence belongs to the pyridoxamine 5'-phosphate oxidase family. As to quaternary structure, homodimer. FMN is required as a cofactor.

It carries out the reaction pyridoxamine 5'-phosphate + O2 + H2O = pyridoxal 5'-phosphate + H2O2 + NH4(+). The catalysed reaction is pyridoxine 5'-phosphate + O2 = pyridoxal 5'-phosphate + H2O2. It participates in cofactor metabolism; pyridoxal 5'-phosphate salvage; pyridoxal 5'-phosphate from pyridoxamine 5'-phosphate: step 1/1. It functions in the pathway cofactor metabolism; pyridoxal 5'-phosphate salvage; pyridoxal 5'-phosphate from pyridoxine 5'-phosphate: step 1/1. Functionally, catalyzes the oxidation of either pyridoxine 5'-phosphate (PNP) or pyridoxamine 5'-phosphate (PMP) into pyridoxal 5'-phosphate (PLP). The protein is Pyridoxine/pyridoxamine 5'-phosphate oxidase of Pseudomonas syringae pv. syringae (strain B728a).